The primary structure comprises 357 residues: Alanine racemase (357 aa).

Lys33 (proton acceptor; specific for D-alanine) is an active-site residue. Lys33 carries the N6-(pyridoxal phosphate)lysine modification. Arg129 provides a ligand contact to substrate. The Proton acceptor; specific for L-alanine role is filled by Tyr253. Met301 lines the substrate pocket.

Belongs to the alanine racemase family. The cofactor is pyridoxal 5'-phosphate.

The catalysed reaction is L-alanine = D-alanine. The protein operates within amino-acid biosynthesis; D-alanine biosynthesis; D-alanine from L-alanine: step 1/1. Catalyzes the interconversion of L-alanine and D-alanine. May also act on other amino acids. This is Alanine racemase (alr) from Pseudomonas fluorescens (strain ATCC BAA-477 / NRRL B-23932 / Pf-5).